The chain runs to 226 residues: PKHD-type hydroxylase MADE_1018490 (226 aa).

In terms of domain architecture, Fe2OG dioxygenase spans 77–177; sequence RIFPPCFNRY…RIAAITWIQS (101 aa). Fe cation-binding residues include His95, Asp97, and His158. Arg168 contacts 2-oxoglutarate.

Requires Fe(2+) as cofactor. L-ascorbate is required as a cofactor.

This Alteromonas mediterranea (strain DSM 17117 / CIP 110805 / LMG 28347 / Deep ecotype) protein is PKHD-type hydroxylase MADE_1018490.